Here is a 294-residue protein sequence, read N- to C-terminus: uncharacterized protein (294 aa).

It belongs to the glycosyltransferase 2 family. WaaE/KdtX subfamily.

This is an uncharacterized protein from Rickettsia bellii (strain RML369-C).